The sequence spans 168 residues: Crossover junction endodeoxyribonuclease RuvC (168 aa).

Catalysis depends on residues D8, E68, and D140. Mg(2+) contacts are provided by D8, E68, and D140.

This sequence belongs to the RuvC family. In terms of assembly, homodimer which binds Holliday junction (HJ) DNA. The HJ becomes 2-fold symmetrical on binding to RuvC with unstacked arms; it has a different conformation from HJ DNA in complex with RuvA. In the full resolvosome a probable DNA-RuvA(4)-RuvB(12)-RuvC(2) complex forms which resolves the HJ. The cofactor is Mg(2+).

Its subcellular location is the cytoplasm. The catalysed reaction is Endonucleolytic cleavage at a junction such as a reciprocal single-stranded crossover between two homologous DNA duplexes (Holliday junction).. Its function is as follows. The RuvA-RuvB-RuvC complex processes Holliday junction (HJ) DNA during genetic recombination and DNA repair. Endonuclease that resolves HJ intermediates. Cleaves cruciform DNA by making single-stranded nicks across the HJ at symmetrical positions within the homologous arms, yielding a 5'-phosphate and a 3'-hydroxyl group; requires a central core of homology in the junction. The consensus cleavage sequence is 5'-(A/T)TT(C/G)-3'. Cleavage occurs on the 3'-side of the TT dinucleotide at the point of strand exchange. HJ branch migration catalyzed by RuvA-RuvB allows RuvC to scan DNA until it finds its consensus sequence, where it cleaves and resolves the cruciform DNA. The polypeptide is Crossover junction endodeoxyribonuclease RuvC (Gluconacetobacter diazotrophicus (strain ATCC 49037 / DSM 5601 / CCUG 37298 / CIP 103539 / LMG 7603 / PAl5)).